The chain runs to 390 residues: Putative nickel insertion protein (390 aa).

The protein belongs to the LarC family.

The sequence is that of Putative nickel insertion protein from Geotalea daltonii (strain DSM 22248 / JCM 15807 / FRC-32) (Geobacter daltonii).